We begin with the raw amino-acid sequence, 784 residues long: MPRALWTAWVWAVISVFTEGASDQASSLSCDPTGVCDGHSRSLNSIPSGLTASVKSLDLSDNEITYVGNRDLQRCVNLKTLRLGANEIHTVEEDSFFHLRNLEYLDLSYNRLSNLSSSWFRSLYVLKFLNLLGNLYKTLGETSLFSHLPNLRTLKVGNSNSFTQIHEKDFTGLTFLEELEISAQNLQLYVPKSLKSIQNISHLILHLRQPVLLLDILIDIVSSLDYLELRDTNLHTFYFSEASISEINTSVKKLTFRNVQFTDDSFVEVVKLFNYVSGILEVEFDDCTHDGVGDFTALTLNRIRYLGNVETLTIRKLHIPQFFLFYDLSSIYPLTGKVKRVTIENSKVFLVPCLLSQHLKSLEYLDLSENLMSEETLKNSACEHAWPVLQTLVLRQNRLKSLEKTGELLLTLKNLNNLDISKNNFLSMPETCQWPGKMKQLNLSSTRIHSLTQCLPQTLEILDVSNNNLDSFSLILPQLKELYISRNKLKTLPDASFLPVLSVMRISGNIINTFSKEQLDSFPQLKALEAGGNNFICSCDFLSFAQGQQALARVLVDWPDGYRCDAPSHVRGQRVQDARLSLSECHRAAVVSAVCCALFLLLLLTGVLCHRFHGLWYMKMMWAWLQAKRKPRKAPRRDLCYDAFVSYSERDSYWVENLMVQELEHFNPPFKLCLHKRDFVPGKWIIDNIIDSIEKSRKTIFVLSESFVRSEWCKYELDFSHFRLFDENNDAAILILLEPIDKKAVPQRFCKLRKIMNTRTYLEWPTDETHREAFWLNLRAAIRS.

An N-terminal signal peptide occupies residues 1 to 20; the sequence is MPRALWTAWVWAVISVFTEG. Residues 21–587 lie on the Extracellular side of the membrane; it reads ASDQASSLSC…ARLSLSECHR (567 aa). Cys-30 and Cys-36 are joined by a disulfide. LRR repeat units lie at residues 54–77, 78–101, 102–125, 126–150, 151–175, 176–199, 200–223, 224–250, 251–278, 279–308, 309–337, 338–361, 362–388, 389–414, 415–437, 438–457, 458–478, 479–500, and 501–524; these read VKSLDLSDNEITYVGNRDLQRCVN, LKTLRLGANEIHTVEEDSFFHLRN, LEYLDLSYNRLSNLSSSWFRSLYV, LKFLNLLGNLYKTLGETSLFSHLPN, LRTLKVGNSNSFTQIHEKDFTGLTF, LEELEISAQNLQLYVPKSLKSIQN, ISHLILHLRQPVLLLDILIDIVSS, LDYLELRDTNLHTFYFSEASISEINTS, VKKLTFRNVQFTDDSFVEVVKLFNYVSG, ILEVEFDDCTHDGVGDFTALTLNRIRYLGN, VETLTIRKLHIPQFFLFYDLSSIYPLTGK, VKRVTIENSKVFLVPCLLSQHLKS, LEYLDLSENLMSEETLKNSACEHAWPV, LQTLVLRQNRLKSLEKTGELLLTLKN, LNNLDISKNNFLSMPETCQWPGK, MKQLNLSSTRIHSLTQCLPQ, TLEILDVSNNNLDSFSLILPQ, LKELYISRNKLKTLPDASFLPV, and LSVMRISGNIINTFSKEQLDSFPQ. Asn-114 carries an N-linked (GlcNAc...) asparagine glycan. N-linked (GlcNAc...) asparagine glycosylation occurs at Asn-199. N-linked (GlcNAc...) asparagine glycosylation occurs at Asn-248. Residues Cys-353 and Cys-382 are joined by a disulfide bond. An intrachain disulfide couples Cys-432 to Cys-454. Residue Asn-442 is glycosylated (N-linked (GlcNAc...) asparagine). In terms of domain architecture, LRRCT spans 525 to 579; it reads LKALEAGGNNFICSCDFLSFAQGQQALARVLVDWPDGYRCDAPSHVRGQRVQDAR. A helical membrane pass occupies residues 588-608; the sequence is AAVVSAVCCALFLLLLLTGVL. Residues 609-784 lie on the Cytoplasmic side of the membrane; that stretch reads CHRFHGLWYM…WLNLRAAIRS (176 aa). Residues 639 to 782 form the TIR domain; it reads LCYDAFVSYS…AFWLNLRAAI (144 aa). Lys-754 is covalently cross-linked (Glycyl lysine isopeptide (Lys-Gly) (interchain with G-Cter in ubiquitin)). Positions 761-778 match the ATG16L1-binding motif motif; the sequence is YLEWPTDETHREAFWLNL.

Belongs to the Toll-like receptor family. As to quaternary structure, interacts with LY96, TLR1 and TLR6 (via extracellular domain). TLR2 seems to exist in heterodimers with either TLR1 or TLR6 before stimulation by the ligand. The heterodimers form bigger oligomers in response to their corresponding ligands as well as further heterotypic associations with other receptors such as CD14 and/or CD36. Binds MYD88 (via TIR domain). Interacts with TICAM1. Interacts with CNPY3. Interacts with ATG16L1. Interacts with PPP1R11. Interacts with TICAM2. Interacts with TIRAP. Ubiquitinated at Lys-754 by PPP1R11, leading to its degradation. Deubiquitinated by USP2. Post-translationally, glycosylation of Asn-442 is critical for secretion of the N-terminal ectodomain of TLR2.

It localises to the membrane. The protein resides in the cytoplasmic vesicle. The protein localises to the phagosome membrane. It is found in the membrane raft. In terms of biological role, cooperates with LY96 to mediate the innate immune response to bacterial lipoproteins and other microbial cell wall components. Cooperates with TLR1 or TLR6 to mediate the innate immune response to bacterial lipoproteins or lipopeptides. Acts via MYD88 and TRAF6, leading to NF-kappa-B activation, cytokine secretion and the inflammatory response. May also promote apoptosis in response to lipoproteins. Forms activation clusters composed of several receptors depending on the ligand, these clusters trigger signaling from the cell surface and subsequently are targeted to the Golgi in a lipid-raft dependent pathway. Forms the cluster TLR2:TLR6:CD14:CD36 in response to diacylated lipopeptides and TLR2:TLR1:CD14 in response to triacylated lipopeptides. In Ovis aries (Sheep), this protein is Toll-like receptor 2 (TLR2).